We begin with the raw amino-acid sequence, 206 residues long: Phosphoribosyl-dephospho-CoA transferase (206 aa).

Residues aspartate 131 and aspartate 133 contribute to the active site.

This sequence belongs to the MdcG family.

It catalyses the reaction apo-[malonate decarboxylase ACP] + 2'-(5''-triphospho-alpha-D-ribosyl)-3'-dephospho-CoA = holo-[malonate decarboxylase ACP] + diphosphate. Functionally, transfers 2'-(5-triphosphoribosyl)-3'-dephosphocoenzyme-A to the apo-[acyl-carrier-protein] of the malonate decarboxylase to yield holo-[acyl-carrier-protein]. The protein is Phosphoribosyl-dephospho-CoA transferase of Pseudomonas fluorescens (strain Pf0-1).